A 63-amino-acid polypeptide reads, in one-letter code: MGKVHGSLARAGKVKSQTPKVEKQEKPKKPQGRAYMRLLYTRRFVNVTLTNGKRKMNPSPASQ.

The tract at residues 1–33 (MGKVHGSLARAGKVKSQTPKVEKQEKPKKPQGR) is disordered.

The protein belongs to the eukaryotic ribosomal protein eS30 family. As to quaternary structure, component of the small ribosomal subunit. Mature ribosomes consist of a small (40S) and a large (60S) subunit. The 40S subunit contains about 32 different proteins and 1 molecule of RNA (18S). The 60S subunit contains 45 different proteins and 3 molecules of RNA (25S, 5.8S and 5S).

It is found in the cytoplasm. Component of the ribosome, a large ribonucleoprotein complex responsible for the synthesis of proteins in the cell. The small ribosomal subunit (SSU) binds messenger RNAs (mRNAs) and translates the encoded message by selecting cognate aminoacyl-transfer RNA (tRNA) molecules. The large subunit (LSU) contains the ribosomal catalytic site termed the peptidyl transferase center (PTC), which catalyzes the formation of peptide bonds, thereby polymerizing the amino acids delivered by tRNAs into a polypeptide chain. The nascent polypeptides leave the ribosome through a tunnel in the LSU and interact with protein factors that function in enzymatic processing, targeting, and the membrane insertion of nascent chains at the exit of the ribosomal tunnel. This chain is Small ribosomal subunit protein eS30 (RPS30), found in Candida albicans (strain SC5314 / ATCC MYA-2876) (Yeast).